Here is a 758-residue protein sequence, read N- to C-terminus: Putative transcriptional regulatory protein YJL206C (758 aa).

A DNA-binding region (zn(2)-C6 fungal-type) is located at residues 47-73 (CIACRKRKVRCSGNIPCRLCQTNSYEC).

It belongs to the ASG1 family.

The protein localises to the nucleus. The polypeptide is Putative transcriptional regulatory protein YJL206C (Saccharomyces cerevisiae (strain ATCC 204508 / S288c) (Baker's yeast)).